Here is a 470-residue protein sequence, read N- to C-terminus: Uronate isomerase (470 aa).

It belongs to the metallo-dependent hydrolases superfamily. Uronate isomerase family.

It carries out the reaction D-glucuronate = D-fructuronate. The enzyme catalyses aldehydo-D-galacturonate = keto-D-tagaturonate. Its pathway is carbohydrate metabolism; pentose and glucuronate interconversion. This is Uronate isomerase from Cronobacter sakazakii (strain ATCC BAA-894) (Enterobacter sakazakii).